Here is a 382-residue protein sequence, read N- to C-terminus: Na(+)/H(+) antiporter NhaA (382 aa).

11 consecutive transmembrane segments (helical) span residues 13-33 (IGGILLFIAAVIAIIIANSPF), 58-78 (LLLWINDGLMAIYFLLIGLEI), 94-114 (LVPALTALAGLIFPALIFIFF), 124-144 (GWAIPTATDIAFTLGIVSLLG), 153-173 (ILLTAIAIFDDIAAIVIIALF), 179-199 (SLLSLSLALVFTLILIGLNYF), 204-224 (ISVFMLFGVALWIAVLKSGVH), 256-276 (VVFLILPLFAFANAGVSFVGL), 285-305 (VVLGIGLGLFLGKQLGIFLSL), 325-345 (VYGIALICGVGFTMSLFIGSL), and 357-377 (MVKIGVVLGSFIAGLTGFLVL).

Belongs to the NhaA Na(+)/H(+) (TC 2.A.33) antiporter family.

Its subcellular location is the cell inner membrane. It catalyses the reaction Na(+)(in) + 2 H(+)(out) = Na(+)(out) + 2 H(+)(in). In terms of biological role, na(+)/H(+) antiporter that extrudes sodium in exchange for external protons. This chain is Na(+)/H(+) antiporter NhaA, found in Legionella pneumophila (strain Paris).